Consider the following 101-residue polypeptide: Putative membrane protein insertion efficiency factor (101 aa).

The protein belongs to the UPF0161 family.

The protein localises to the cell membrane. Could be involved in insertion of integral membrane proteins into the membrane. The polypeptide is Putative membrane protein insertion efficiency factor (Lacticaseibacillus casei (strain BL23) (Lactobacillus casei)).